Consider the following 270-residue polypeptide: 4-hydroxy-tetrahydrodipicolinate reductase (270 aa).

NAD(+) contacts are provided by residues 9–14 (GAGGRM) and Glu35. Residue Arg36 coordinates NADP(+). Residues 99 to 101 (GTT) and 123 to 126 (ASNF) contribute to the NAD(+) site. His156 (proton donor/acceptor) is an active-site residue. His157 lines the (S)-2,3,4,5-tetrahydrodipicolinate pocket. Lys160 serves as the catalytic Proton donor. 166–167 (GT) lines the (S)-2,3,4,5-tetrahydrodipicolinate pocket.

It belongs to the DapB family.

The protein localises to the cytoplasm. The catalysed reaction is (S)-2,3,4,5-tetrahydrodipicolinate + NAD(+) + H2O = (2S,4S)-4-hydroxy-2,3,4,5-tetrahydrodipicolinate + NADH + H(+). It catalyses the reaction (S)-2,3,4,5-tetrahydrodipicolinate + NADP(+) + H2O = (2S,4S)-4-hydroxy-2,3,4,5-tetrahydrodipicolinate + NADPH + H(+). The protein operates within amino-acid biosynthesis; L-lysine biosynthesis via DAP pathway; (S)-tetrahydrodipicolinate from L-aspartate: step 4/4. Catalyzes the conversion of 4-hydroxy-tetrahydrodipicolinate (HTPA) to tetrahydrodipicolinate. This chain is 4-hydroxy-tetrahydrodipicolinate reductase, found in Pasteurella multocida (strain Pm70).